Reading from the N-terminus, the 233-residue chain is Octanoyltransferase (233 aa).

Residues 38–218 (AGGPDTLLLL…AVCDALDGVL (181 aa)) enclose the BPL/LPL catalytic domain. The segment covering 57-66 (RRTEPHERPL) has biased composition (basic and acidic residues). Positions 57 to 77 (RRTEPHERPLDGTPVVDTDRG) are disordered. Residues 76-83 (RGGKITWH), 148-150 (AIG), and 161-163 (GFA) each bind substrate. The active-site Acyl-thioester intermediate is cysteine 179.

This sequence belongs to the LipB family.

The protein localises to the cytoplasm. The enzyme catalyses octanoyl-[ACP] + L-lysyl-[protein] = N(6)-octanoyl-L-lysyl-[protein] + holo-[ACP] + H(+). The protein operates within protein modification; protein lipoylation via endogenous pathway; protein N(6)-(lipoyl)lysine from octanoyl-[acyl-carrier-protein]: step 1/2. Its function is as follows. Catalyzes the transfer of endogenously produced octanoic acid from octanoyl-acyl-carrier-protein onto the lipoyl domains of lipoate-dependent enzymes. Lipoyl-ACP can also act as a substrate although octanoyl-ACP is likely to be the physiological substrate. This is Octanoyltransferase from Mycolicibacterium paratuberculosis (strain ATCC BAA-968 / K-10) (Mycobacterium paratuberculosis).